A 29-amino-acid chain; its full sequence is Lambda-theraphotoxin-Ec2b (29 aa).

3 disulfides stabilise this stretch: Cys2/Cys16, Cys9/Cys21, and Cys15/Cys25.

The protein belongs to the neurotoxin 30 (phrixotoxin) family. As to expression, expressed by the venom gland.

It is found in the secreted. In terms of biological role, insect-selective neurotoxin that potently blocks insect calcium-activated potassium (BKCa) channels (Slo-type) in cockroach dorsal unpaired median (DUM) neurons (IC(50)=25.3 nM). This occurs in the absence of any shifts in the voltage dependence of activation. May interact with the turret and/or loop region of the external entrance to the channel and does not project deeply into the pore of the channel. In vivo, does not show toxicity in mice after intracerebroventricular injection of up to 25 pmol/g (1.8 ug/20 g mouse). This is Lambda-theraphotoxin-Ec2b from Eucratoscelus constrictus (African red-rump baboon spider).